Reading from the N-terminus, the 113-residue chain is Protein translation factor SUI1 homolog 1 (113 aa).

The interval 1 to 24 (MSELDSQVPTAFDPFADANAEDSG) is disordered. Ser2 is modified (N-acetylserine).

The protein belongs to the SUI1 family.

Its function is as follows. Probably involved in translation. In Arabidopsis thaliana (Mouse-ear cress), this protein is Protein translation factor SUI1 homolog 1.